A 122-amino-acid chain; its full sequence is Large ribosomal subunit protein uL14 (122 aa).

Belongs to the universal ribosomal protein uL14 family. As to quaternary structure, part of the 50S ribosomal subunit. Forms a cluster with proteins L3 and L19. In the 70S ribosome, L14 and L19 interact and together make contacts with the 16S rRNA in bridges B5 and B8.

In terms of biological role, binds to 23S rRNA. Forms part of two intersubunit bridges in the 70S ribosome. The polypeptide is Large ribosomal subunit protein uL14 (Corynebacterium diphtheriae (strain ATCC 700971 / NCTC 13129 / Biotype gravis)).